A 254-amino-acid chain; its full sequence is Pimeloyl-[acyl-carrier protein] methyl ester esterase (254 aa).

One can recognise an AB hydrolase-1 domain in the interval 14 to 238 (VVMLHGWGLH…QASHAPFLSH (225 aa)). Substrate contacts are provided by residues Trp20, 80-81 (SL), and 142-146 (FLALQ). Ser80 functions as the Nucleophile in the catalytic mechanism. Residues Asp204 and His232 contribute to the active site. His232 contributes to the substrate binding site.

Belongs to the AB hydrolase superfamily. Carboxylesterase BioH family. As to quaternary structure, monomer.

It localises to the cytoplasm. The enzyme catalyses 6-carboxyhexanoyl-[ACP] methyl ester + H2O = 6-carboxyhexanoyl-[ACP] + methanol + H(+). Its pathway is cofactor biosynthesis; biotin biosynthesis. In terms of biological role, the physiological role of BioH is to remove the methyl group introduced by BioC when the pimeloyl moiety is complete. It allows to synthesize pimeloyl-ACP via the fatty acid synthetic pathway through the hydrolysis of the ester bonds of pimeloyl-ACP esters. This Chromobacterium violaceum (strain ATCC 12472 / DSM 30191 / JCM 1249 / CCUG 213 / NBRC 12614 / NCIMB 9131 / NCTC 9757 / MK) protein is Pimeloyl-[acyl-carrier protein] methyl ester esterase.